The following is a 154-amino-acid chain: 6,7-dimethyl-8-ribityllumazine synthase (154 aa).

5-amino-6-(D-ribitylamino)uracil contacts are provided by residues tryptophan 22, 56–58, and 80–82; these read AWE and CVV. 85 to 86 is a binding site for (2S)-2-hydroxy-3-oxobutyl phosphate; the sequence is DT. Histidine 88 (proton donor) is an active-site residue. Asparagine 113 provides a ligand contact to 5-amino-6-(D-ribitylamino)uracil. Arginine 127 is a (2S)-2-hydroxy-3-oxobutyl phosphate binding site.

It belongs to the DMRL synthase family. Forms an icosahedral capsid composed of 60 subunits, arranged as a dodecamer of pentamers.

The catalysed reaction is (2S)-2-hydroxy-3-oxobutyl phosphate + 5-amino-6-(D-ribitylamino)uracil = 6,7-dimethyl-8-(1-D-ribityl)lumazine + phosphate + 2 H2O + H(+). Its pathway is cofactor biosynthesis; riboflavin biosynthesis; riboflavin from 2-hydroxy-3-oxobutyl phosphate and 5-amino-6-(D-ribitylamino)uracil: step 1/2. Catalyzes the formation of 6,7-dimethyl-8-ribityllumazine by condensation of 5-amino-6-(D-ribitylamino)uracil with 3,4-dihydroxy-2-butanone 4-phosphate. This is the penultimate step in the biosynthesis of riboflavin. This chain is 6,7-dimethyl-8-ribityllumazine synthase, found in Xylella fastidiosa (strain M23).